Reading from the N-terminus, the 84-residue chain is Beta-toxin Tf1a (84 aa).

An N-terminal signal peptide occupies residues 1 to 20 (MKGMILFISCLLLIGIVVEC). The LCN-type CS-alpha/beta domain maps to 21–82 (KEGYLMDHEG…VWERATNRCG (62 aa)). 4 disulfides stabilise this stretch: C31-C81, C35-C57, C43-C62, and C47-C64. The residue at position 81 (C81) is a Cysteine amide.

Belongs to the long (4 C-C) scorpion toxin superfamily. Sodium channel inhibitor family. Beta subfamily. Expressed by the venom gland.

It localises to the secreted. Its function is as follows. Beta toxins bind voltage-independently at site-4 of sodium channels (Nav) and shift the voltage of activation toward more negative potentials thereby affecting sodium channel activation and promoting spontaneous and repetitive firing. The toxin induces a leftward shift, on all channels tested (including Blattella germanica and Varroa destructor Nav1), displacing a change in voltage dependence activation to more hyperpolarized potentials. In addition, the toxin mostly inhibits peak current of hNav1.4/SCN4A (53% inhibition of peak current at 100 nM) and hNav1.5/SCN5A (71% inhibition). This chain is Beta-toxin Tf1a, found in Tityus fasciolatus (Central Brazilian scorpion).